The sequence spans 321 residues: Trem-like transcript 2 protein (321 aa).

Positions 1-18 are cleaved as a signal peptide; it reads MAPAFLLLLLLWPQGCVS. Over 19–268 the chain is Extracellular; it reads GPSADSVYTK…PSIRHQDVYS (250 aa). The Ig-like V-type domain occupies 20-121; the sequence is PSADSVYTKV…ILYPLMGFQL (102 aa). 2 disulfide bridges follow: Cys-41/Cys-105 and Cys-56/Cys-63. An N-linked (GlcNAc...) asparagine glycan is attached at Asn-89. Composition is skewed to polar residues over residues 189–220 and 227–241; these read GYSF…NARD and SIST…RSPT. The interval 189 to 241 is disordered; sequence GYSFTATSTTSQGPRRTMGSQTVTASPSNARDSSAGPESISTKSGDLSTRSPT. A helical membrane pass occupies residues 269–289; it reads TVLGVVLTLLVLMLIMVYGFW. Residues 290 to 321 lie on the Cytoplasmic side of the membrane; sequence KKRHMASYSMCSDPSTRDPPGRPEPYVEVYLI.

As to quaternary structure, interacts with CD276 and this interaction enhances T-cell activation. As to expression, detected in cultured B-cells, T-cell leukemia and monocyte leukemia. Expressed constitutively on CD8 T-cells and induced on CD4 T-cells after activation.

The protein localises to the cell membrane. Cell surface receptor that may play a role in the innate and adaptive immune response. Acts as a counter-receptor for CD276 and interaction with CD276 on T-cells enhances T-cell activation. The polypeptide is Trem-like transcript 2 protein (TREML2) (Homo sapiens (Human)).